The sequence spans 556 residues: Non-structural maintenance of chromosome element 5 (556 aa).

Component of the Smc5-Smc6 complex which consists of KRE29, MMS21, NSE1, NSE3, NSE4, NSE5, SMC5 and SMC6. Interacts with KRE29.

The protein resides in the nucleus. Its subcellular location is the chromosome. In terms of biological role, acts in a DNA repair pathway for removal of UV-induced DNA damage that is distinct from classical nucleotide excision repair and in repair of ionizing radiation damage. Functions in homologous recombination repair of DNA double strand breaks and in recovery of stalled replication forks. This Saccharomyces cerevisiae (strain ATCC 204508 / S288c) (Baker's yeast) protein is Non-structural maintenance of chromosome element 5 (NSE5).